Consider the following 208-residue polypeptide: UPF0711 protein C18orf21 homolog (208 aa).

Residues 123–137 are compositionally biased toward basic residues; it reads SKHKSTPGSASKHRT. Disordered regions lie at residues 123–180 and 189–208; these read SKHK…KSSP and MLEN…LSSL. The span at 138–152 shows a compositional bias: polar residues; the sequence is PQTVNWATPKSVANR. Residues 153 to 180 show a composition bias toward low complexity; the sequence is TPSSTPRSASSNTSSSSSSKSSSVKSSP.

It belongs to the UPF0711 family.

This is UPF0711 protein C18orf21 homolog from Danio rerio (Zebrafish).